We begin with the raw amino-acid sequence, 118 residues long: Putative ankyrin repeat protein R747 (118 aa).

Residues 70-99 (NCYYLLDYAIMKNDIPVIVTLIEKGANINR) form an ANK repeat.

The polypeptide is Putative ankyrin repeat protein R747 (Acanthamoeba polyphaga (Amoeba)).